We begin with the raw amino-acid sequence, 277 residues long: Type II restriction enzyme EcoRI (277 aa).

Residues Asp-91, Glu-111, and Lys-113 contribute to the active site. Mg(2+)-binding residues include Asp-91 and Glu-111.

The protein belongs to the EcoRI type II restriction endonuclease family. As to quaternary structure, homodimer. Requires Mg(2+) as cofactor.

The catalysed reaction is Endonucleolytic cleavage of DNA to give specific double-stranded fragments with terminal 5'-phosphates.. A P subtype restriction enzyme that recognizes the double-stranded sequence 5'-GAATTC-3' and cleaves after G-1. This Escherichia coli protein is Type II restriction enzyme EcoRI (ecoRIR).